The primary structure comprises 107 residues: uncharacterized protein (107 aa).

Belongs to the HesB/IscA family.

This is an uncharacterized protein from Azotobacter vinelandii.